Here is a 233-residue protein sequence, read N- to C-terminus: Adapter protein MecA (233 aa).

Belongs to the MecA family. As to quaternary structure, homodimer.

Its function is as follows. Enables the recognition and targeting of unfolded and aggregated proteins to the ClpC protease or to other proteins involved in proteolysis. In Lactococcus lactis subsp. lactis (strain IL1403) (Streptococcus lactis), this protein is Adapter protein MecA.